Reading from the N-terminus, the 156-residue chain is Large ribosomal subunit protein uL15 (156 aa).

The interval 14-35 (GSRTHGWGRVGQHRKSGSSGGK) is disordered.

This sequence belongs to the universal ribosomal protein uL15 family. As to quaternary structure, part of the 50S ribosomal subunit.

Binds to the 23S rRNA. This is Large ribosomal subunit protein uL15 from Pyrobaculum islandicum (strain DSM 4184 / JCM 9189 / GEO3).